A 358-amino-acid polypeptide reads, in one-letter code: Cyclin-D1-binding protein 1 (358 aa).

Interaction with TCF3 stretches follow at residues 1 to 183 (MESA…VDLV) and 149 to 358 (ISYN…EVES). 2 interaction with RPLP0 regions span residues 1–189 (MESA…AHEE) and 238–358 (LIIP…EVES). A required for interaction with CCND1 region spans residues 1–207 (MESAAVSAAP…DPYCGLLNDI (207 aa)).

Belongs to the CCNDBP1 family. Interacts with CCND1 and GRAP2. May also interact with COPS5, RPLP0, SIRT6, SYF2 and TCF3. Phosphorylated.

It is found in the cytoplasm. Its subcellular location is the nucleus. Its function is as follows. May negatively regulate cell cycle progression. May act at least in part via inhibition of the cyclin-D1/CDK4 complex, thereby preventing phosphorylation of RB1 and blocking E2F-dependent transcription. The polypeptide is Cyclin-D1-binding protein 1 (CCNDBP1) (Bos taurus (Bovine)).